We begin with the raw amino-acid sequence, 185 residues long: Signal peptidase I (185 aa).

Residues Met-1–Ala-20 lie on the Cytoplasmic side of the membrane. Residues Ile-21 to Val-41 traverse the membrane as a helical segment. Residues Asp-42–Lys-185 lie on the Extracellular side of the membrane. Residues Ser-45 and Lys-85 contribute to the active site.

The protein belongs to the peptidase S26 family.

The protein localises to the cell membrane. The enzyme catalyses Cleavage of hydrophobic, N-terminal signal or leader sequences from secreted and periplasmic proteins.. The polypeptide is Signal peptidase I (sipA) (Bacillus amyloliquefaciens (Bacillus velezensis)).